Here is a 646-residue protein sequence, read N- to C-terminus: Nitrous-oxide reductase (646 aa).

Positions 1–21 are disordered; the sequence is MMSKHPHSPSTPQDETPSVPG. Positions 1 to 52 form a signal peptide, tat-type signal; sequence MMSKHPHSPSTPQDETPSVPGRRRFMNSAALAGLATVVACTDKGAPAGSAAA. Positions 140, 141, and 189 each coordinate Cu cation. 5 residues coordinate Ca(2+): Tyr272, Glu275, Met283, Asp289, and Asn342. Cu cation is bound by residues His344, His400, and His452. Ca(2+)-binding residues include Lys473 and Glu488. Positions 513, 592, 627, 629, 631, 635, and 638 each coordinate Cu cation. The segment at 551–646 is COX2-like; sequence KKVTVRLTSQ…EMRSRMIVEA (96 aa).

Belongs to the NosZ family. This sequence in the C-terminal section; belongs to the cytochrome c oxidase subunit 2 family. In terms of assembly, homodimer. Ca(2+) is required as a cofactor. It depends on Cu cation as a cofactor. Predicted to be exported by the Tat system. The position of the signal peptide cleavage has not been experimentally proven.

It localises to the periplasm. The catalysed reaction is N2 + 2 Fe(III)-[cytochrome c] + H2O = nitrous oxide + 2 Fe(II)-[cytochrome c] + 2 H(+). It participates in nitrogen metabolism; nitrate reduction (denitrification); dinitrogen from nitrate: step 4/4. Nitrous-oxide reductase is part of a bacterial respiratory system which is activated under anaerobic conditions in the presence of nitrate or nitrous oxide. In Ralstonia nicotianae (strain ATCC BAA-1114 / GMI1000) (Ralstonia solanacearum), this protein is Nitrous-oxide reductase (nosZ).